A 252-amino-acid polypeptide reads, in one-letter code: MIKEAGAIISTRHCNPQNGDRCVAALARVECTHFLWPMCIGEVAHVSAEITYTSKHSVEVQVNMMSENILTGAKKLTNKATLWYAPLSLTNVDKVLEEPPVVYFRQEQEEEGQKRYKTQKLERMETNWRNGDIVQPVLNPEPNTVSYSQSSLIHLVGPSDCTLHSFVHEGVTMKVMDEVAGILAARHCKTNLVTASMEAINFDNKIRKGCIKTISGRMTFTSNKSVEIEVLVDADCVVDSSQKRYRAASVFT.

HotDog ACOT-type domains lie at 1 to 90 (MIKE…LSLT) and 146 to 252 (SYSQ…SVFT).

In terms of assembly, homodimer. Expressed in all tissues examined. Up-regulated in nasopharyngeal carcinoma (at protein level).

Its subcellular location is the cytoplasm. It carries out the reaction hexadecanoyl-CoA + H2O = hexadecanoate + CoA + H(+). In terms of biological role, acyl-CoA thioesterases are a group of enzymes that catalyze the hydrolysis of acyl-CoAs to the free fatty acid and coenzyme A (CoASH), providing the potential to regulate intracellular levels of acyl-CoAs, free fatty acids and CoASH. This chain is Putative cytosolic acyl coenzyme A thioester hydrolase-like (ACOT7L), found in Homo sapiens (Human).